Reading from the N-terminus, the 625-residue chain is Phosphomethylpyrimidine synthase (625 aa).

Substrate contacts are provided by residues Asn-230, Met-259, Tyr-288, His-324, 344–346, 385–388, and Glu-424; these read SRG and DGLR. His-428 lines the Zn(2+) pocket. Tyr-451 is a binding site for substrate. Residue His-492 participates in Zn(2+) binding. The [4Fe-4S] cluster site is built by Cys-572, Cys-575, and Cys-580.

This sequence belongs to the ThiC family. As to quaternary structure, homodimer. [4Fe-4S] cluster is required as a cofactor.

It carries out the reaction 5-amino-1-(5-phospho-beta-D-ribosyl)imidazole + S-adenosyl-L-methionine = 4-amino-2-methyl-5-(phosphooxymethyl)pyrimidine + CO + 5'-deoxyadenosine + formate + L-methionine + 3 H(+). Its pathway is cofactor biosynthesis; thiamine diphosphate biosynthesis. Catalyzes the synthesis of the hydroxymethylpyrimidine phosphate (HMP-P) moiety of thiamine from aminoimidazole ribotide (AIR) in a radical S-adenosyl-L-methionine (SAM)-dependent reaction. This chain is Phosphomethylpyrimidine synthase, found in Xanthomonas campestris pv. campestris (strain 8004).